The following is a 459-amino-acid chain: Transmembrane protein 143 (459 aa).

2 helical membrane passes run 280–300 (LLNLMLVVSGVAIFVNVGMVV) and 301–321 (LTDLKVATSLLLLLFAIFMGL). Ser-332 is subject to Phosphoserine. A disordered region spans residues 435–459 (GFPKLDPVAPITSEPPQATPSSNIS). Polar residues predominate over residues 448-459 (EPPQATPSSNIS).

It is found in the membrane. The sequence is that of Transmembrane protein 143 (TMEM143) from Homo sapiens (Human).